A 663-amino-acid chain; its full sequence is (R)-specific secondary-alkylsulfatase (663 aa).

The first 28 residues, 1-28 (MSRFIRASQRRTLLATLIAATLAQPLLA), serve as a signal peptide directing secretion. Residues H179, H181, D183, and H184 each coordinate Zn(2+). Q232 contributes to the sulfate binding site. Positions 291 and 310 each coordinate Zn(2+). Residues 318–323 (NLLTPR) and R328 each bind sulfate. H355 is a Zn(2+) binding site. Sulfate is bound at residue Y417.

Belongs to the metallo-beta-lactamase superfamily. Type III sulfatase family. As to quaternary structure, homodimer.

The enzyme catalyses an (R)-secondary-alkyl sulfate + H2O = an (S)-secondary-alcohol + sulfate.. Its function is as follows. Alkylsulfatase that catalyzes the enantioselective hydrolysis of secondary-alkylsulfates with strict inversion of configuration, leading to the formation of homochiral (S)-configurated alcohols and nonreacted sulfate esters. The substrate spectrum includes a range of linear, branched or cyclic sec-alkylsulfates. Can use sec-alkylsulfate esters bearing aromatic, olefinic and acetylenic moieties. Acts by cleaving the C-O bond, resulting in inversion at the carbon. This chain is (R)-specific secondary-alkylsulfatase, found in Pseudomonas sp.